We begin with the raw amino-acid sequence, 281 residues long: Pre T-cell antigen receptor alpha (281 aa).

The N-terminal stretch at 1 to 23 (MAGTWLLLLLALGCPALPTGVGG) is a signal peptide. The Extracellular segment spans residues 24 to 146 (TPFPSLAPPI…QEPLRGTPGG (123 aa)). C47 and C107 are joined by a disulfide. Residue N67 is glycosylated (N-linked (GlcNAc...) asparagine). The chain crosses the membrane as a helical span at residues 147 to 167 (ALWLGVLRLLLFKLLLFDLLL). The Cytoplasmic portion of the chain corresponds to 168–281 (TCSCLCDPAG…LPPPLQAGAA (114 aa)). The tract at residues 196–233 (LHPATETGGREATSSPRPQPRDRRWGDTPPGRKPGSPV) is disordered.

As to quaternary structure, heterodimer with TCRB; disulfide linked. This heterodimer assembles with CD3 proteins into a signaling-competent pre-T-cell receptor complex. Interacts with RHBDD1. In terms of tissue distribution, expressed in immature but not mature T-cells. Also found in CD34+ cells from peripheral blood, CD34+ precursors from umbilical cord blood and adult bone marrow.

It localises to the membrane. It is found in the cell membrane. Functionally, component of the pre-T-cell receptor complex (composed of PTCRA, TCRB and the CD3 complex) that has a crucial role in early T-cell development, particularly alpha-beta T cell differentiation. The protein is Pre T-cell antigen receptor alpha of Homo sapiens (Human).